We begin with the raw amino-acid sequence, 188 residues long: FMN-dependent NADPH-azoreductase (188 aa).

This sequence belongs to the azoreductase type 2 family. Homotetramer. It depends on FMN as a cofactor.

In terms of biological role, catalyzes the reductive cleavage of azo bond in aromatic azo compounds to the corresponding amines. Requires NADPH, but not NADH, as an electron donor for its activity. This is FMN-dependent NADPH-azoreductase (azo1) from Staphylococcus aureus (strain MSSA476).